The chain runs to 753 residues: Transcription factor SOX-30 (753 aa).

Disordered stretches follow at residues Met1 to Ala45 and Ala137 to Arg161. Residues Glu7–Pro23 show a composition bias toward pro residues. The HMG box DNA-binding region spans Val337 to Val405. 2 disordered regions span residues Thr514–Pro575 and Pro726–Leu753. Composition is skewed to polar residues over residues Thr531–Gln563 and Pro726–Thr739.

Interacts with CTNNB1, competitively inhibiting CTNNB1-TCF7L2/TCF4 interaction.

The protein resides in the nucleus. It localises to the cytoplasm. Functionally, acts both as a transcriptional activator and a repressor. Binds to the DNA sequence 5'-ACAAT-3' and shows a preference for guanine residues surrounding this core motif. Binds to its own promoter and activates its own transcription. Required to activate the expression of postmeiotic genes involved in spermiogenesis. Binds to the promoter region of CTNNB1 and represses its transcription which leads to inhibition of Wnt signaling. Also inhibits Wnt signaling by binding to the CTNNB1 protein, preventing interaction of CTNNB1 with TCF7L2/TCF4. The protein is Transcription factor SOX-30 (SOX30) of Homo sapiens (Human).